Here is a 144-residue protein sequence, read N- to C-terminus: MKAQWCRPVAMDLGVYQLRHFSISFLSSLLGTENASVRLDNSSSGASVVAIDNKIEQAMDLVKSHLMYAVREEVEVLKEQIKELIEKNSQLEQENNLLKTLASPEQLAQFQAQLQTGSPPATTQPQGSTQPPAQPASQGSGPTA.

The interval Leu77 to Leu98 is leucine-zipper. Residues Gln109–Ala144 are disordered.

It belongs to the TSC-22/Dip/Bun family. As to quaternary structure, forms homodimers. Forms a heterodimer with TSC22D4/THG1. Interacts with histone H1-2. Interacts with GNL3.

The protein resides in the cytoplasm. Its subcellular location is the nucleus. The protein localises to the mitochondrion. Functionally, transcriptional repressor. Plays a role in the repression of hematopoietic precursor cell growth. Promotes IL2 deprivation-induced apoptosis in T-lymphocytes, via repression of TSC22D3/GILZ transcription and activation of the caspase cascade. Positively regulates cell death in response to TGFB3 during mammary gland involution. The polypeptide is TSC22 domain family protein 1 (Bathyergus suillus (Cape dune mole rat)).